A 520-amino-acid polypeptide reads, in one-letter code: Glutamate decarboxylase-like protein FG08083 (520 aa).

86–88 contributes to the substrate binding site; sequence KLV. N6-(pyridoxal phosphate)lysine is present on K300. The interval 338 to 357 is disordered; sequence KNGVSSEQSANTNGSEKESW. The span at 340 to 351 shows a compositional bias: polar residues; sequence GVSSEQSANTNG. R492 lines the substrate pocket.

Belongs to the group II decarboxylase family. It depends on pyridoxal 5'-phosphate as a cofactor.

Its pathway is mycotoxin biosynthesis. Glutamate decarboxylase-like protein; part of the gene cluster that mediates the biosynthesis of butenolide, a mycotoxin that shows antibiotic activity but does not seem to play a major role in the spread of head blight in wheat. Butenolide is derived from glutamic acid via a 4-acetamido-2-butenoic acid intermediate. The predicted function of the NADH:flavin oxidoreductase FG08077, the cytochrome P450 monooxygenase FG08079, the decarboxylase FG08083, and the putative acetyltransferase FG08082 are consistent with this pathway, however, the respective activities of the butelonide biosynthesis cluster enzymes have still to be experimentally determined. This Gibberella zeae (strain ATCC MYA-4620 / CBS 123657 / FGSC 9075 / NRRL 31084 / PH-1) (Wheat head blight fungus) protein is Glutamate decarboxylase-like protein FG08083.